An 86-amino-acid chain; its full sequence is Cytochrome c oxidase subunit 3 (86 aa).

Residues 1–15 (MAHQAHSYHMVDPSP) lie on the Mitochondrial matrix side of the membrane. A helical membrane pass occupies residues 16–34 (WPIFGAAAALLTTSGLVMW). Over 35–40 (FHYNSS) the chain is Mitochondrial intermembrane. A helical membrane pass occupies residues 41-66 (ILLAAGLLSMLLVMLQWWREIVREST). The Mitochondrial matrix portion of the chain corresponds to 67 to 86 (FQGHHTPTVQKGLRYGMILF).

The protein belongs to the cytochrome c oxidase subunit 3 family. Component of the cytochrome c oxidase (complex IV, CIV), a multisubunit enzyme composed of 14 subunits. The complex is composed of a catalytic core of 3 subunits MT-CO1, MT-CO2 and MT-CO3, encoded in the mitochondrial DNA, and 11 supernumerary subunits COX4I, COX5A, COX5B, COX6A, COX6B, COX6C, COX7A, COX7B, COX7C, COX8 and NDUFA4, which are encoded in the nuclear genome. The complex exists as a monomer or a dimer and forms supercomplexes (SCs) in the inner mitochondrial membrane with NADH-ubiquinone oxidoreductase (complex I, CI) and ubiquinol-cytochrome c oxidoreductase (cytochrome b-c1 complex, complex III, CIII), resulting in different assemblies (supercomplex SCI(1)III(2)IV(1) and megacomplex MCI(2)III(2)IV(2)).

The protein localises to the mitochondrion inner membrane. The catalysed reaction is 4 Fe(II)-[cytochrome c] + O2 + 8 H(+)(in) = 4 Fe(III)-[cytochrome c] + 2 H2O + 4 H(+)(out). In terms of biological role, component of the cytochrome c oxidase, the last enzyme in the mitochondrial electron transport chain which drives oxidative phosphorylation. The respiratory chain contains 3 multisubunit complexes succinate dehydrogenase (complex II, CII), ubiquinol-cytochrome c oxidoreductase (cytochrome b-c1 complex, complex III, CIII) and cytochrome c oxidase (complex IV, CIV), that cooperate to transfer electrons derived from NADH and succinate to molecular oxygen, creating an electrochemical gradient over the inner membrane that drives transmembrane transport and the ATP synthase. Cytochrome c oxidase is the component of the respiratory chain that catalyzes the reduction of oxygen to water. Electrons originating from reduced cytochrome c in the intermembrane space (IMS) are transferred via the dinuclear copper A center (CU(A)) of subunit 2 and heme A of subunit 1 to the active site in subunit 1, a binuclear center (BNC) formed by heme A3 and copper B (CU(B)). The BNC reduces molecular oxygen to 2 water molecules using 4 electrons from cytochrome c in the IMS and 4 protons from the mitochondrial matrix. The protein is Cytochrome c oxidase subunit 3 (MT-CO3) of Anas platyrhynchos (Mallard).